Reading from the N-terminus, the 218-residue chain is Thiopurine S-methyltransferase (218 aa).

S-adenosyl-L-methionine contacts are provided by W10, L45, E66, and R123.

The protein belongs to the class I-like SAM-binding methyltransferase superfamily. TPMT family.

It localises to the cytoplasm. The enzyme catalyses S-adenosyl-L-methionine + a thiopurine = S-adenosyl-L-homocysteine + a thiopurine S-methylether.. The protein is Thiopurine S-methyltransferase of Shewanella sp. (strain MR-4).